Reading from the N-terminus, the 218-residue chain is MTQDEMKRAVARAAVDYAKGGIIGVGTGSTANHFIDALAEVKGRIEGTVASSEATAARLKSHGIQVLDLNSVGELEVYVDGADEITQHFAMIKGGGGALTREKIVAACSKQFVCIADDSKLVDVLGKFPLPVEVIPMARSHVARELVKLGGQPRLREGFTTDNGNVILDVHNLSIIDPVSLETAINQIVGVVTNGLFARRGADVLLLGTSTGVKTFTR.

Substrate-binding positions include 27 to 30, 80 to 83, and 93 to 96; these read TGST, DGAD, and KGGG. Glu102 functions as the Proton acceptor in the catalytic mechanism. Residue Lys120 participates in substrate binding.

This sequence belongs to the ribose 5-phosphate isomerase family. Homodimer.

The catalysed reaction is aldehydo-D-ribose 5-phosphate = D-ribulose 5-phosphate. It participates in carbohydrate degradation; pentose phosphate pathway; D-ribose 5-phosphate from D-ribulose 5-phosphate (non-oxidative stage): step 1/1. Functionally, catalyzes the reversible conversion of ribose-5-phosphate to ribulose 5-phosphate. The sequence is that of Ribose-5-phosphate isomerase A from Thiobacillus denitrificans (strain ATCC 25259 / T1).